A 359-amino-acid chain; its full sequence is DNA integrity scanning protein DisA (359 aa).

Residues 7 to 146 (DDIFRATLAA…GRRYVLDGSA (140 aa)) enclose the DAC domain. ATP is bound by residues glycine 74, leucine 92, and 105–109 (TRHRT).

The protein belongs to the DisA family. In terms of assembly, homooctamer. Requires Mg(2+) as cofactor.

The catalysed reaction is 2 ATP = 3',3'-c-di-AMP + 2 diphosphate. In terms of biological role, participates in a DNA-damage check-point that is active prior to asymmetric division when DNA is damaged. DisA forms globular foci that rapidly scan along the chromosomes during sporulation, searching for lesions. When a lesion is present, DisA pauses at the lesion site. This triggers a cellular response that culminates in a temporary block in sporulation initiation. Also has diadenylate cyclase activity, catalyzing the condensation of 2 ATP molecules into cyclic di-AMP (c-di-AMP). c-di-AMP acts as a signaling molecule that couples DNA integrity with progression of sporulation. The rise in c-di-AMP level generated by DisA while scanning the chromosome, operates as a positive signal that advances sporulation; upon encountering a lesion, the DisA focus arrests at the damaged site and halts c-di-AMP synthesis. The chain is DNA integrity scanning protein DisA from Frankia alni (strain DSM 45986 / CECT 9034 / ACN14a).